Consider the following 156-residue polypeptide: Ribosomal RNA large subunit methyltransferase H (156 aa).

Residues Leu-73, Gly-104, and 123-128 (IGPLTL) each bind S-adenosyl-L-methionine.

It belongs to the RNA methyltransferase RlmH family. In terms of assembly, homodimer.

The protein resides in the cytoplasm. It carries out the reaction pseudouridine(1915) in 23S rRNA + S-adenosyl-L-methionine = N(3)-methylpseudouridine(1915) in 23S rRNA + S-adenosyl-L-homocysteine + H(+). Its function is as follows. Specifically methylates the pseudouridine at position 1915 (m3Psi1915) in 23S rRNA. This is Ribosomal RNA large subunit methyltransferase H from Xanthomonas axonopodis pv. citri (strain 306).